The sequence spans 672 residues: MSEILDLSFLSEMERDLILSVLQRDEELRKADEKRIRRLKNELLEIKRKGAKRGSQHYSDRTCARCQEGLGRLISKSNTCVGCNHLVCRECRVLESNGSWRCKVCSKEIELKKATGDWFYDQKVNRFAYRTGSDIIRMSLRRKPAVNKRETVGQSLLQQTQMGDIWPGRRIIQEQQKEQSVLFEVPKLKSGKSALEAESESLDSYTADSDSTSRRDSLDKSGLFPEWKKMSAPKSQVEKEIAPGNQNAVCGDEGDMIFKKNTRKVLRPSEYTKSVIDLRPEDVAQESGILGDRSKSVPGLSVDMEDEEEEEEDIDHLVKLHRQKLARGSMQSGSSMSTIGSMMSLYSEAGDFGNVSVTGKIAFSLKFEQKTQTLVIHVKECHQLAYADEAKKRSNPYVKTYLLPDKSRQGKRKTSIKRDTINPLYDETFRYEISESLLAQRTLQFSVWHHGRFGRNTFLGEAEVHMDSWKLDKKLDHCLPLHGKISTESSPGLPAHKGELVVSLKYIPASKLPVGGDRKKSKGGEGGELQVWIKEAKNLTAAKSGGTSDSFVKGYLLPMRNKASKRKTPVMKKTLNPHYNHTFVYNGVRLEDLQHMCLELTVWDREPLASNDFLGGVRLGVGTGISSGEVVDWMDSTGEEVSLWQKMRQYPGSWAEGTLQLRSSMVKQKLGV.

A RabBD domain is found at 4-122; the sequence is ILDLSFLSEM…KATGDWFYDQ (119 aa). The FYVE-type zinc finger occupies 63–105; sequence CARCQEGLGRLISKSNTCVGCNHLVCRECRVLESNGSWRCKVC. The tract at residues 199–222 is disordered; the sequence is SESLDSYTADSDSTSRRDSLDKSG. Residues serine 201, serine 204, serine 217, serine 221, and serine 274 each carry the phosphoserine modification. A C2 1 domain is found at 357–479; that stretch reads VTGKIAFSLK…KLDKKLDHCL (123 aa). At serine 489 the chain carries Phosphoserine. The 127-residue stretch at 508–634 folds into the C2 2 domain; it reads PASKLPVGGD…ISSGEVVDWM (127 aa).

Part of a ternary complex containing STX1A and RAB27A. Can bind both dominant negative and dominant active mutants of RAB27A. Binds STXBP1, RAB3A, RAB8A and RAB27B. Interacts with MYO5A. Detected in insulin-secreting cell lines.

The protein localises to the membrane. Its subcellular location is the cytoplasmic vesicle. It is found in the secretory vesicle membrane. Functionally, modulates exocytosis of dense-core granules and secretion of hormones in the pancreas and the pituitary. Interacts with vesicles containing negatively charged phospholipids in a Ca(2+)-independent manner. The chain is Synaptotagmin-like protein 4 (Sytl4) from Rattus norvegicus (Rat).